Here is a 675-residue protein sequence, read N- to C-terminus: DNA gyrase subunit B (675 aa).

The 115-residue stretch at 453–567 folds into the Toprim domain; that stretch reads SELYVVEGDS…NGHIFLAQPP (115 aa). Residues Glu-459, Asp-532, and Asp-534 each coordinate Mg(2+).

The protein belongs to the type II topoisomerase GyrB family. In terms of assembly, heterotetramer, composed of two GyrA and two GyrB chains. In the heterotetramer, GyrA contains the active site tyrosine that forms a transient covalent intermediate with DNA, while GyrB binds cofactors and catalyzes ATP hydrolysis. The cofactor is Mg(2+). Requires Mn(2+) as cofactor. Ca(2+) serves as cofactor.

It localises to the cytoplasm. It carries out the reaction ATP-dependent breakage, passage and rejoining of double-stranded DNA.. With respect to regulation, inhibited by 4-quinoline drugs (nalidixic acid, ciprofloxacin, ofloxacin), although it is much less sensitive than the corresponding enzyme from E.coli. GyrB intrinsic ATPase activity inhibited by aminopyrazinamide and pyrrolamide derivatives. A type II topoisomerase that negatively supercoils closed circular double-stranded (ds) DNA in an ATP-dependent manner to modulate DNA topology and maintain chromosomes in an underwound state. Negative supercoiling favors strand separation, and DNA replication, transcription, recombination and repair, all of which involve strand separation. Also able to catalyze the interconversion of other topological isomers of dsDNA rings, including catenanes and knotted rings. Type II topoisomerases break and join 2 DNA strands simultaneously in an ATP-dependent manner. This is DNA gyrase subunit B from Mycolicibacterium smegmatis (strain ATCC 700084 / mc(2)155) (Mycobacterium smegmatis).